Consider the following 151-residue polypeptide: Protein-export protein SecB (151 aa).

It belongs to the SecB family. As to quaternary structure, homotetramer, a dimer of dimers. One homotetramer interacts with 1 SecA dimer.

It is found in the cytoplasm. Its function is as follows. One of the proteins required for the normal export of preproteins out of the cell cytoplasm. It is a molecular chaperone that binds to a subset of precursor proteins, maintaining them in a translocation-competent state. It also specifically binds to its receptor SecA. The polypeptide is Protein-export protein SecB (Acinetobacter baylyi (strain ATCC 33305 / BD413 / ADP1)).